The following is a 300-amino-acid chain: D-alanine--D-alanine ligase (300 aa).

Positions 99 to 293 constitute an ATP-grasp domain; the sequence is KKILKYANIN…FAELLNSIVK (195 aa). 126–181 provides a ligand contact to ATP; sequence IEKIGYPVFVKPNSGGSSVATNLVKDKEGIKEAVELALKYDKEVMIENYTKGEEIT. Residues aspartate 248, glutamate 260, and asparagine 262 each coordinate Mg(2+).

The protein belongs to the D-alanine--D-alanine ligase family. It depends on Mg(2+) as a cofactor. Mn(2+) is required as a cofactor.

The protein resides in the cytoplasm. The enzyme catalyses 2 D-alanine + ATP = D-alanyl-D-alanine + ADP + phosphate + H(+). Its pathway is cell wall biogenesis; peptidoglycan biosynthesis. Functionally, cell wall formation. This Clostridium botulinum (strain ATCC 19397 / Type A) protein is D-alanine--D-alanine ligase.